Consider the following 519-residue polypeptide: Cytochrome P450 CYP99A1 (519 aa).

Residue Cys-453 coordinates heme.

The protein belongs to the cytochrome P450 family. Heme is required as a cofactor.

It is found in the membrane. The sequence is that of Cytochrome P450 CYP99A1 (CYP99A1) from Sorghum bicolor (Sorghum).